Consider the following 122-residue polypeptide: Phospholipase A2 crotoxin basic subunit CBb (122 aa).

Cystine bridges form between cysteine 26–cysteine 115, cysteine 28–cysteine 44, cysteine 43–cysteine 95, cysteine 49–cysteine 122, cysteine 50–cysteine 88, cysteine 57–cysteine 81, and cysteine 75–cysteine 86. Ca(2+) is bound by residues tyrosine 27, glycine 29, and glycine 31. Histidine 47 is an active-site residue. Aspartate 48 is a binding site for Ca(2+). Aspartate 89 is an active-site residue.

Belongs to the phospholipase A2 family. Group II subfamily. D49 sub-subfamily. In terms of assembly, heterodimer of one of the acidic (CA1, CA2, CA3 or CA4) and one of the basic (CBa1, CBa2, CBb, CBc or CBd) subunits; non-covalently linked. The acidic subunit is non-toxic, without enzymatic activity and comprises 3 peptides that are cross-linked by 5 disulfide bridges. The basic subunit is toxic, has phospholipase A2 activity and is composed of a single chain. Multiple variants of each subunit give different crotoxin complexes that can be subdivided into 2 classes: (1) those of high toxicity, low PLA2 activity (CBb, CBc and CBd linked with high affinity to any CA) and high stability (K(d)=4.5 nM) and (2) those of moderate toxicity, high PLA2 activity (CBa2 linked with low affinity to any CA) and low stability (K(d)=25 nM). Ca(2+) is required as a cofactor. In terms of tissue distribution, expressed by the venom gland.

The protein localises to the secreted. The enzyme catalyses a 1,2-diacyl-sn-glycero-3-phosphocholine + H2O = a 1-acyl-sn-glycero-3-phosphocholine + a fatty acid + H(+). Its function is as follows. Heterodimer CA-CB: Crotoxin is a potent presynaptic neurotoxin that possesses phospholipase A2 (PLA2) activity and exerts a lethal action by blocking neuromuscular transmission. It consists of a non-covalent association of a basic and weakly toxic PLA2 subunit (CBa2, CBb, CBc, or CBd), with a small acidic, non-enzymatic and non-toxic subunit (CA1, CA2, CA3 or CA4). The complex acts by binding to a specific 48-kDa protein (R48) receptor located on presynaptic membranes, forming a transient ternary complex CA-CB-R48, followed by dissociation of the CA-CB complex and release of the CA subunit. At equilibrium, only the CB subunits remain associated with the specific crotoxin receptor. In addition to neurotoxicity, crotoxin has been found to exert myotoxicity, nephrotoxicity, and cardiovascular toxicity. Moreover, anti-inflammatory, immunomodulatory, anti-tumor and analgesic effects of crotoxin have also been reported. Functionally, monomer CBb: The basic subunit of crotoxin is a snake venom phospholipase A2 (PLA2) that exhibits weak neurotoxicity (10-fold less than the heterodimer) and strong anticoagulant effects by binding to factor Xa (F10) and inhibiting the prothrombinase activity. In addition, it shows the same effects described for the heterodimer and binds the nucleotide-binding domain (NBD1) of CFTR chloride channels and increases the channel current. PLA2 catalyzes the calcium-dependent hydrolysis of the 2-acyl groups in 3-sn-phosphoglycerides. The chain is Phospholipase A2 crotoxin basic subunit CBb from Crotalus durissus terrificus (South American rattlesnake).